The chain runs to 634 residues: Chaperone protein HtpG (634 aa).

The a; substrate-binding stretch occupies residues methionine 1–arginine 342. Positions glutamate 343–glutamine 559 are b. Residues isoleucine 560 to valine 634 form a c region.

It belongs to the heat shock protein 90 family. In terms of assembly, homodimer.

It is found in the cytoplasm. In terms of biological role, molecular chaperone. Has ATPase activity. The sequence is that of Chaperone protein HtpG from Pseudomonas fluorescens (strain ATCC BAA-477 / NRRL B-23932 / Pf-5).